The chain runs to 676 residues: Pescadillo homolog (676 aa).

Residues 298-327 are a coiled coil; the sequence is IAAMADDEDEQEVEMAEADAEDDDEEENTE. Disordered stretches follow at residues 298-338, 413-439, 478-502, and 515-676; these read IAAM…TAPD, PLAN…STKP, VKPK…EAEA, and EVDD…AERA. Positions 302–327 are enriched in acidic residues; sequence ADDEDEQEVEMAEADAEDDDEEENTE. Residues 351–466 form the BRCT domain; that stretch reads EIASLFAPFT…KLLRPDLYAP (116 aa). Positions 415–427 are enriched in low complexity; sequence ANGASAAGAEDAA. Composition is skewed to acidic residues over residues 515–524, 539–557, and 565–577; these read EVDDDEDMDA, DVAD…DAEG, and FDDE…DISE. Positions 568–676 form a coiled coil; that stretch reads ESEAESDISE…EKAKAAAERA (109 aa). 4 stretches are compositionally biased toward basic and acidic residues: residues 579-608, 620-631, 643-659, and 666-676; these read EAAR…KKEQ, KRAEEEERDRQK, KRIE…SENL, and LEKAKAAAERA.

Belongs to the pescadillo family. In terms of assembly, component of the NOP7 complex, composed of ERB1, NOP7 and YTM1. The complex is held together by ERB1, which interacts with NOP7 via its N-terminal domain and with YTM1 via a high-affinity interaction between the seven-bladed beta-propeller domains of the 2 proteins. The NOP7 complex associates with the 66S pre-ribosome.

The protein localises to the nucleus. Its subcellular location is the nucleolus. It localises to the nucleoplasm. Component of the NOP7 complex, which is required for maturation of the 25S and 5.8S ribosomal RNAs and formation of the 60S ribosome. The sequence is that of Pescadillo homolog from Phaeosphaeria nodorum (strain SN15 / ATCC MYA-4574 / FGSC 10173) (Glume blotch fungus).